We begin with the raw amino-acid sequence, 160 residues long: Ribosomal RNA large subunit methyltransferase H (160 aa).

The S-adenosyl-L-methionine site is built by Leu76 and Gly108.

The protein belongs to the RNA methyltransferase RlmH family. As to quaternary structure, homodimer.

Its subcellular location is the cytoplasm. The catalysed reaction is pseudouridine(1915) in 23S rRNA + S-adenosyl-L-methionine = N(3)-methylpseudouridine(1915) in 23S rRNA + S-adenosyl-L-homocysteine + H(+). Its function is as follows. Specifically methylates the pseudouridine at position 1915 (m3Psi1915) in 23S rRNA. This is Ribosomal RNA large subunit methyltransferase H from Nitrobacter winogradskyi (strain ATCC 25391 / DSM 10237 / CIP 104748 / NCIMB 11846 / Nb-255).